The sequence spans 443 residues: Enolase B (443 aa).

H156 and E165 together coordinate substrate. The Proton donor role is filled by E208. Residues D243, E296, and D323 each coordinate Mg(2+). Substrate is bound by residues E296 and D323. Catalysis depends on K348, which acts as the Proton acceptor. Residues 375–378 and K399 contribute to the substrate site; that span reads SHRS.

This sequence belongs to the enolase family. As to quaternary structure, homodimer. The cofactor is Mg(2+).

It is found in the cytoplasm. The enzyme catalyses (2R)-2-phosphoglycerate = phosphoenolpyruvate + H2O. The protein operates within carbohydrate degradation; glycolysis; pyruvate from D-glyceraldehyde 3-phosphate: step 4/5. This Dictyostelium discoideum (Social amoeba) protein is Enolase B (enoB).